The following is a 155-amino-acid chain: 2-C-methyl-D-erythritol 2,4-cyclodiphosphate synthase (155 aa).

A divalent metal cation-binding residues include Asp-8 and His-10. 4-CDP-2-C-methyl-D-erythritol 2-phosphate is bound by residues Asp-8–His-10 and His-34–Ser-35. His-42 contacts a divalent metal cation. Residues Asp-56–Gly-58, Phe-61–Asp-65, Ala-100–Leu-106, Thr-132–Glu-135, Phe-139, and Lys-142 contribute to the 4-CDP-2-C-methyl-D-erythritol 2-phosphate site.

It belongs to the IspF family. As to quaternary structure, homotrimer. A divalent metal cation serves as cofactor.

The enzyme catalyses 4-CDP-2-C-methyl-D-erythritol 2-phosphate = 2-C-methyl-D-erythritol 2,4-cyclic diphosphate + CMP. The protein operates within isoprenoid biosynthesis; isopentenyl diphosphate biosynthesis via DXP pathway; isopentenyl diphosphate from 1-deoxy-D-xylulose 5-phosphate: step 4/6. Its function is as follows. Involved in the biosynthesis of isopentenyl diphosphate (IPP) and dimethylallyl diphosphate (DMAPP), two major building blocks of isoprenoid compounds. Catalyzes the conversion of 4-diphosphocytidyl-2-C-methyl-D-erythritol 2-phosphate (CDP-ME2P) to 2-C-methyl-D-erythritol 2,4-cyclodiphosphate (ME-CPP) with a corresponding release of cytidine 5-monophosphate (CMP). This chain is 2-C-methyl-D-erythritol 2,4-cyclodiphosphate synthase, found in Clostridium botulinum (strain 657 / Type Ba4).